We begin with the raw amino-acid sequence, 359 residues long: 3-dehydroquinate synthase (359 aa).

NAD(+)-binding positions include 71-76, 105-109, 129-130, Lys142, Lys151, and 169-172; these read DGEAHK, GVIGD, TT, and TLHT. Glu184, His247, and His264 together coordinate Zn(2+).

It belongs to the sugar phosphate cyclases superfamily. Dehydroquinate synthase family. The cofactor is NAD(+). It depends on Co(2+) as a cofactor. Zn(2+) serves as cofactor.

Its subcellular location is the cytoplasm. The enzyme catalyses 7-phospho-2-dehydro-3-deoxy-D-arabino-heptonate = 3-dehydroquinate + phosphate. It participates in metabolic intermediate biosynthesis; chorismate biosynthesis; chorismate from D-erythrose 4-phosphate and phosphoenolpyruvate: step 2/7. Its function is as follows. Catalyzes the conversion of 3-deoxy-D-arabino-heptulosonate 7-phosphate (DAHP) to dehydroquinate (DHQ). The polypeptide is 3-dehydroquinate synthase (Neisseria meningitidis serogroup A / serotype 4A (strain DSM 15465 / Z2491)).